Reading from the N-terminus, the 459-residue chain is MEPGSQQQPSAPAQQPPPVGHQVVHVRTDSETDLEALFNAVMNPKNANLPQTLPMRMRKLPDSFFKQPQPEAKSHSRQASTDGGSAGALTPQHVRAHSSPASLQLAAVSPGALSPQGVVTGLAPPSAPHLRQSSYEIPDDVPLPPGWEMAKTPSGQRYFLNHIDQTTTWQDPRKAMLSQINVTAPTSPPVQQNIMTPTGPLPDGWEQALTPEGEAYFINHKNKSTSWLDPRLDPRFAMNQQRLSQNAPVKAPPALPPPSPQTGVLGSGGNQQMRLQQLQMEKERLRLKHQELLRQVRPQELALRSQIPPMEQDGGTQNPVCTTGISQELRTMTMNSSDPFLNSGTYHSRDESTESGLSMSSYSVPRTPDDFLNSVDEMDTGEAITQSTIPTQQNRFPDYLETLPGTNVDLGTLEGEAMNVEGEELMPSLQEALSSDILNDMETVLAATKLDKESFLTWL.

The segment covering 1-13 (MEPGSQQQPSAPA) has biased composition (low complexity). Positions 1-22 (MEPGSQQQPSAPAQQPPPVGHQ) are disordered. Phosphoserine; by LATS1 and LATS2 is present on residues S30, S80, S98, and S134. 2 disordered regions span residues 65–99 (FKQP…AHSS) and 126–145 (SAPH…PLPP). WW domains are found at residues 141–174 (VPLP…DPRK) and 199–232 (GPLP…DPRL). A disordered region spans residues 246–268 (NAPVKAPPALPPPSPQTGVLGSG). Residues 250–260 (KAPPALPPPSP) show a composition bias toward pro residues. The transactivation domain stretch occupies residues 261–459 (QTGVLGSGGN…LDKESFLTWL (199 aa)). Positions 269–297 (GNQQMRLQQLQMEKERLRLKHQELLRQVR) form a coiled coil. A disordered region spans residues 344-363 (GTYHSRDESTESGLSMSSYS). Residues 354–363 (ESGLSMSSYS) show a composition bias toward polar residues.

This sequence belongs to the YAP1 family. As to quaternary structure, interacts with tead1. Post-translationally, phosphorylated by lats1 and lats2; leading to cytoplasmic translocation and inactivation.

The protein resides in the cytoplasm. It localises to the nucleus. Its subcellular location is the cell junction. The protein localises to the tight junction. It is found in the cell membrane. Functionally, transcriptional regulator which can act both as a coactivator and a corepressor and is the critical downstream regulatory target in the Hippo signaling pathway that plays a pivotal role in organ size control and tumor suppression by restricting proliferation and promoting apoptosis. Plays a key role in tissue tension and 3D tissue shape by regulating cortical actomyosin network formation. Required for expansion of the neural plate and neural plate border zone progenitor pools. Acts as a direct regulator of pax3 expression via interaction with tead1. In Xenopus laevis (African clawed frog), this protein is Transcriptional coactivator YAP1-A.